The chain runs to 288 residues: Homoserine kinase (288 aa).

79–89 provides a ligand contact to ATP; the sequence is PPARGLGSSSA.

The protein belongs to the GHMP kinase family. Homoserine kinase subfamily.

The protein resides in the cytoplasm. The catalysed reaction is L-homoserine + ATP = O-phospho-L-homoserine + ADP + H(+). Its pathway is amino-acid biosynthesis; L-threonine biosynthesis; L-threonine from L-aspartate: step 4/5. Functionally, catalyzes the ATP-dependent phosphorylation of L-homoserine to L-homoserine phosphate. In Listeria monocytogenes serotype 4a (strain HCC23), this protein is Homoserine kinase.